Consider the following 159-residue polypeptide: MSDRIYLTRDGYNRLKEELHLLSTQTRKEVLEKIAEARSHGDLSENAEYDAAREEQSQLEAKIGDLENKLASATILDPKQIKTDRVYILTSVKLRNLDDEDEIIEYTLVSSEEADSDLGKISVRSPVGRALIGKSVGDKVTISVPKGELHYEILDIFVK.

The stretch at 43-76 (LSENAEYDAAREEQSQLEAKIGDLENKLASATIL) forms a coiled coil.

This sequence belongs to the GreA/GreB family.

Functionally, necessary for efficient RNA polymerase transcription elongation past template-encoded arresting sites. The arresting sites in DNA have the property of trapping a certain fraction of elongating RNA polymerases that pass through, resulting in locked ternary complexes. Cleavage of the nascent transcript by cleavage factors such as GreA or GreB allows the resumption of elongation from the new 3'terminus. GreA releases sequences of 2 to 3 nucleotides. This chain is Transcription elongation factor GreA, found in Chlorobaculum parvum (strain DSM 263 / NCIMB 8327) (Chlorobium vibrioforme subsp. thiosulfatophilum).